The chain runs to 221 residues: Protein myomaker (221 aa).

Topologically, residues 1–3 are extracellular; the sequence is MGT. A helical transmembrane segment spans residues 4–24; the sequence is LVAKLLLPTLSSLAFLPTVSI. Residues 25-34 lie on the Cytoplasmic side of the membrane; it reads AAKRRFHMEA. A helical transmembrane segment spans residues 35-55; the sequence is MVYLFTLFFVALHHACNGPGL. At 56-64 the chain is on the extracellular side; the sequence is SVLCFMRHD. A helical membrane pass occupies residues 65 to 85; that stretch reads ILEYFSVYGTALSMWVSLMAL. Residues 86 to 92 lie on the Cytoplasmic side of the membrane; it reads ADFDEPK. The helical transmembrane segment at 93–110 threads the bilayer; it reads RSTFVMFGVLTIAVRIYH. Residues 111–113 are Extracellular-facing; sequence DRW. The helical transmembrane segment at 114 to 134 threads the bilayer; it reads GYGVYSGPIGTAILIIAAKWL. Over 135-153 the chain is Cytoplasmic; the sequence is QKMKEKKGLYPDKSVYTQQ. The helical transmembrane segment at 154–174 threads the bilayer; that stretch reads IGPGLCFGALALMLRFFFEDW. Position 175 (aspartate 175) is a topological domain, extracellular. The chain crosses the membrane as a helical span at residues 176–196; sequence YTYVHSFYHCALAMSFVLLLP. Topologically, residues 197 to 221 are cytoplasmic; the sequence is KVNKKAGSPGTPAKLDCSTLCCACV. Residues cysteine 217 and cysteine 218 are each lipidated (S-palmitoyl cysteine).

The protein belongs to the TMEM8 family. Interacts with MYMX. In terms of processing, palmitoylated at the C-terminus; palmitoylation promotes localization to the Golgi apparatus.

Its subcellular location is the cell membrane. The protein localises to the golgi apparatus membrane. Functionally, myoblast-specific protein that mediates myoblast fusion, an essential step for the formation of multi-nucleated muscle fibers. Actively participates in the membrane fusion reaction by mediating the mixing of cell membrane lipids (hemifusion) upstream of MYMX. Acts independently of MYMX. Involved in skeletal muscle regeneration in response to injury by mediating the fusion of satellite cells, a population of muscle stem cells, with injured myofibers. Also involved in skeletal muscle hypertrophy, probably by mediating the fusion of satellite cells with myofibers. The polypeptide is Protein myomaker (Homo sapiens (Human)).